The following is a 213-amino-acid chain: Probable GTP-binding protein EngB (213 aa).

The EngB-type G domain occupies 30 to 204 (EGFEVAFAGR…YTVLAGWMEL (175 aa)). Residues 38–45 (GRSNAGKS), 64–68 (GRTQL), 82–85 (DLPG), 149–152 (TKAD), and 182–185 (LFSA) contribute to the GTP site. Mg(2+)-binding residues include S45 and T66.

It belongs to the TRAFAC class TrmE-Era-EngA-EngB-Septin-like GTPase superfamily. EngB GTPase family. Mg(2+) serves as cofactor.

Functionally, necessary for normal cell division and for the maintenance of normal septation. The polypeptide is Probable GTP-binding protein EngB (Pseudomonas fluorescens (strain ATCC BAA-477 / NRRL B-23932 / Pf-5)).